Consider the following 382-residue polypeptide: Porphobilinogen deaminase, chloroplastic (382 aa).

The N-terminal 62 residues, 1 to 62 (MDIASSSLSQ…KQSSSGFVKA (62 aa)), are a transit peptide targeting the chloroplast. Dipyrromethane is bound by residues arginine 80 and serine 82. Serine 123 is modified (phosphoserine). Dipyrromethane-binding positions include 156 to 157 (KD), 200 to 206 (TASLRRK), and 223 to 229 (RGNVQTR). Aspartate 157 serves as the catalytic Proton donor/acceptor. S-(dipyrrolylmethanemethyl)cysteine is present on cysteine 316.

The protein belongs to the HMBS family. In terms of assembly, monomer. The cofactor is dipyrromethane.

The protein localises to the plastid. The protein resides in the chloroplast. It catalyses the reaction 4 porphobilinogen + H2O = hydroxymethylbilane + 4 NH4(+). It functions in the pathway porphyrin-containing compound metabolism; protoporphyrin-IX biosynthesis; coproporphyrinogen-III from 5-aminolevulinate: step 2/4. The protein operates within porphyrin-containing compound metabolism; chlorophyll biosynthesis. Its activity is regulated as follows. Inhibited by NH(3), heavy-metal ions, hydroxylamine and 2-bromoporphobilinogen. Not inhibited by N-ethylmaleimide. Its function is as follows. Tetrapolymerization of the monopyrrole PBG into the hydroxymethylbilane pre-uroporphyrinogen in several discrete steps. The chain is Porphobilinogen deaminase, chloroplastic (HEMC) from Arabidopsis thaliana (Mouse-ear cress).